The primary structure comprises 219 residues: Histone H1.11R (219 aa).

Composition is skewed to low complexity over residues 1 to 20 (MAET…AAKA) and 28 to 40 (AAGG…PAGP). 2 disordered regions span residues 1 to 42 (MAET…GPSV) and 89 to 219 (LVSK…AKKK). The H15 domain occupies 38–111 (AGPSVTELIT…GASGSFRLSK (74 aa)). 4 stretches are compositionally biased toward basic residues: residues 121–135 (PKKK…KAAA), 143–160 (KKPK…KAKK), 168–183 (KSVK…KKAV), and 192–219 (KAVK…AKKK).

This sequence belongs to the histone H1/H5 family.

It localises to the nucleus. Its subcellular location is the chromosome. Histones H1 are necessary for the condensation of nucleosome chains into higher-order structures. The protein is Histone H1.11R of Gallus gallus (Chicken).